A 167-amino-acid polypeptide reads, in one-letter code: Zymogen granule membrane protein 16 (167 aa).

A signal peptide spans 1–16; the sequence is MLAVALLVLLCASASA. A Jacalin-type lectin domain is found at 24–159; that stretch reads SSYSGEYGGK…IDSISLHWDT (136 aa).

The protein belongs to the jacalin lectin family.

The protein localises to the secreted. It localises to the extracellular space. It is found in the extracellular matrix. Its subcellular location is the zymogen granule lumen. The protein resides in the golgi apparatus lumen. In terms of biological role, may play a role in protein trafficking. May act as a linker molecule between the submembranous matrix on the luminal side of zymogen granule membrane (ZGM) and aggregated secretory proteins during granule formation in the TGN. This chain is Zymogen granule membrane protein 16 (Zg16), found in Mus musculus (Mouse).